The sequence spans 329 residues: U5 small nuclear ribonucleoprotein TSSC4 (329 aa).

2 disordered regions span residues 1–88 (MAEA…MSST) and 104–156 (ARRA…PDYV). Over residues 22 to 41 (DTLPSDTVSLSDSDSDLSLP) the composition is skewed to low complexity. 6 positions are modified to phosphoserine: serine 60, serine 67, serine 86, serine 132, serine 143, and serine 146. Positions 77 to 104 (VQPFHLRGMSSTFSQRSRDIFDCLEGAA) are hom2; mediates interaction with the U5 snRNP complexes and required for spliceosomal tri-snRNP complex assembly. An interaction with SNRNP200 region spans residues 149 to 316 (VPPVPDYVAH…SRKRSRDHFR (168 aa)). The tract at residues 150-186 (PPVPDYVAHPERWTKYSLEDVTEVSEQSNQATALAFL) is hom3; mediates interaction with the U5 snRNP complexes. A hom4; necessary for interaction with the PRPF19 complex and required for spliceosomal tri-snRNP complex assembly region spans residues 201–250 (FNQDPSSCGEGRVIFTKPVRGVEARHERKRVLGKVGEPGRGGLGNPATDR). Position 217 is an N6-acetyllysine (lysine 217). A disordered region spans residues 221–329 (GVEARHERKR…SSPEDPGAEV (109 aa)). Phosphoserine is present on serine 265. Residues 306–317 (GSRKRSRDHFRN) show a composition bias toward basic residues. Phosphoserine is present on serine 321.

The protein belongs to the TSSC4 family. In terms of assembly, interacts in a RNA-independent manner with distinct U5 snRNP-containing complexes, the mono-U5 snRNP and the post-splicing U5 snRNP-PRPF19 complex. Interacts with SNRNP200; the interaction is direct, excludes recruitment of C9ORF78 and WBP4 to SNRNP200 and negatively regulates its RNA helicase activity. Interacts with PRPF8; the interaction is direct. Expressed in fetal brain, lung, liver and kidney. Widely expressed in adult tissues.

Its subcellular location is the nucleus. The protein localises to the cytoplasm. Protein associated with the U5 snRNP, during its maturation and its post-splicing recycling and which is required for spliceosomal tri-snRNP complex assembly in the nucleus. Has a molecular sequestering activity and transiently hinders SNRNP200 binding sites for constitutive splicing factors that intervene later during the assembly of the spliceosome and splicing. Together with its molecular sequestering activity, may also function as a molecular adapter and placeholder, coordinating the assembly of the U5 snRNP and its association with the U4/U6 di-snRNP. The polypeptide is U5 small nuclear ribonucleoprotein TSSC4 (Homo sapiens (Human)).